The primary structure comprises 250 residues: 23S rRNA (guanosine-2'-O-)-methyltransferase RlmB (250 aa).

S-adenosyl-L-methionine is bound by residues G198, L218, and L227.

The protein belongs to the class IV-like SAM-binding methyltransferase superfamily. RNA methyltransferase TrmH family. RlmB subfamily.

The protein resides in the cytoplasm. The catalysed reaction is guanosine(2251) in 23S rRNA + S-adenosyl-L-methionine = 2'-O-methylguanosine(2251) in 23S rRNA + S-adenosyl-L-homocysteine + H(+). Its function is as follows. Specifically methylates the ribose of guanosine 2251 in 23S rRNA. The sequence is that of 23S rRNA (guanosine-2'-O-)-methyltransferase RlmB from Pseudomonas syringae pv. tomato (strain ATCC BAA-871 / DC3000).